The primary structure comprises 310 residues: 5-oxoprolinase subunit C (310 aa).

The protein belongs to the PxpC family. In terms of assembly, forms a complex composed of PxpA, PxpB and PxpC.

The catalysed reaction is 5-oxo-L-proline + ATP + 2 H2O = L-glutamate + ADP + phosphate + H(+). Catalyzes the cleavage of 5-oxoproline to form L-glutamate coupled to the hydrolysis of ATP to ADP and inorganic phosphate. This chain is 5-oxoprolinase subunit C, found in Escherichia coli (strain K12).